A 63-amino-acid polypeptide reads, in one-letter code: Large ribosomal subunit protein bL28 (63 aa).

The protein belongs to the bacterial ribosomal protein bL28 family.

This Petrotoga mobilis (strain DSM 10674 / SJ95) protein is Large ribosomal subunit protein bL28.